A 620-amino-acid chain; its full sequence is Dihydroxy-acid dehydratase (620 aa).

Position 82 (Asp-82) interacts with Mg(2+). Cys-123 lines the [2Fe-2S] cluster pocket. Mg(2+) contacts are provided by Asp-124 and Lys-125. Lys-125 is subject to N6-carboxylysine. Cys-197 provides a ligand contact to [2Fe-2S] cluster. Mg(2+) is bound at residue Glu-493. The Proton acceptor role is filled by Ser-519.

It belongs to the IlvD/Edd family. Homodimer. It depends on [2Fe-2S] cluster as a cofactor. Mg(2+) serves as cofactor.

The enzyme catalyses (2R)-2,3-dihydroxy-3-methylbutanoate = 3-methyl-2-oxobutanoate + H2O. It catalyses the reaction (2R,3R)-2,3-dihydroxy-3-methylpentanoate = (S)-3-methyl-2-oxopentanoate + H2O. The protein operates within amino-acid biosynthesis; L-isoleucine biosynthesis; L-isoleucine from 2-oxobutanoate: step 3/4. It functions in the pathway amino-acid biosynthesis; L-valine biosynthesis; L-valine from pyruvate: step 3/4. Functionally, functions in the biosynthesis of branched-chain amino acids. Catalyzes the dehydration of (2R,3R)-2,3-dihydroxy-3-methylpentanoate (2,3-dihydroxy-3-methylvalerate) into 2-oxo-3-methylpentanoate (2-oxo-3-methylvalerate) and of (2R)-2,3-dihydroxy-3-methylbutanoate (2,3-dihydroxyisovalerate) into 2-oxo-3-methylbutanoate (2-oxoisovalerate), the penultimate precursor to L-isoleucine and L-valine, respectively. The polypeptide is Dihydroxy-acid dehydratase (Bifidobacterium longum (strain NCC 2705)).